The chain runs to 383 residues: Erythronate-4-phosphate dehydrogenase (383 aa).

2 residues coordinate substrate: Ser-45 and Thr-66. NAD(+) contacts are provided by Asp-146 and Thr-175. Arg-208 is a catalytic residue. Residue Asp-232 participates in NAD(+) binding. Residue Glu-237 is part of the active site. The active-site Proton donor is the His-254. Gly-257 contributes to the NAD(+) binding site.

The protein belongs to the D-isomer specific 2-hydroxyacid dehydrogenase family. PdxB subfamily. Homodimer.

It is found in the cytoplasm. The catalysed reaction is 4-phospho-D-erythronate + NAD(+) = (R)-3-hydroxy-2-oxo-4-phosphooxybutanoate + NADH + H(+). It participates in cofactor biosynthesis; pyridoxine 5'-phosphate biosynthesis; pyridoxine 5'-phosphate from D-erythrose 4-phosphate: step 2/5. In terms of biological role, catalyzes the oxidation of erythronate-4-phosphate to 3-hydroxy-2-oxo-4-phosphonooxybutanoate. The chain is Erythronate-4-phosphate dehydrogenase from Chromohalobacter salexigens (strain ATCC BAA-138 / DSM 3043 / CIP 106854 / NCIMB 13768 / 1H11).